Reading from the N-terminus, the 224-residue chain is Pyridoxine/pyridoxamine 5'-phosphate oxidase (224 aa).

Substrate contacts are provided by residues Arg14 to Tyr17 and Lys76. FMN is bound by residues Arg71–Lys76, Tyr86–Thr87, Arg92, Lys93, and Gln115. Tyr133, Arg137, and Ser141 together coordinate substrate. Residues Gln150–Ser151 and Trp196 contribute to the FMN site. Position 202–204 (Arg202–His204) interacts with substrate. Position 206 (Arg206) interacts with FMN.

It belongs to the pyridoxamine 5'-phosphate oxidase family. In terms of assembly, homodimer. FMN serves as cofactor.

The catalysed reaction is pyridoxamine 5'-phosphate + O2 + H2O = pyridoxal 5'-phosphate + H2O2 + NH4(+). It carries out the reaction pyridoxine 5'-phosphate + O2 = pyridoxal 5'-phosphate + H2O2. It functions in the pathway cofactor metabolism; pyridoxal 5'-phosphate salvage; pyridoxal 5'-phosphate from pyridoxamine 5'-phosphate: step 1/1. It participates in cofactor metabolism; pyridoxal 5'-phosphate salvage; pyridoxal 5'-phosphate from pyridoxine 5'-phosphate: step 1/1. In terms of biological role, catalyzes the oxidation of either pyridoxine 5'-phosphate (PNP) or pyridoxamine 5'-phosphate (PMP) into pyridoxal 5'-phosphate (PLP). This Streptomyces avermitilis (strain ATCC 31267 / DSM 46492 / JCM 5070 / NBRC 14893 / NCIMB 12804 / NRRL 8165 / MA-4680) protein is Pyridoxine/pyridoxamine 5'-phosphate oxidase.